The chain runs to 195 residues: UPF0316 protein Pcar_2434 (195 aa).

Transmembrane regions (helical) follow at residues 13–33, 45–65, and 71–91; these read LFLL…IGTL, WAGV…SQVM, and VWTY…GVLI.

This sequence belongs to the UPF0316 family.

It is found in the cell membrane. This Syntrophotalea carbinolica (strain DSM 2380 / NBRC 103641 / GraBd1) (Pelobacter carbinolicus) protein is UPF0316 protein Pcar_2434.